Here is a 143-residue protein sequence, read N- to C-terminus: Large ribosomal subunit protein uL15 (143 aa).

A disordered region spans residues 1 to 52 (MKLNTLAPAAGSKSAPKRLGRGIGSGLGKTSGKGHKGQKARSGGYHKVGFEG). Over residues 21–31 (RGIGSGLGKTS) the composition is skewed to gly residues.

The protein belongs to the universal ribosomal protein uL15 family. Part of the 50S ribosomal subunit.

Its function is as follows. Binds to the 23S rRNA. This chain is Large ribosomal subunit protein uL15, found in Francisella tularensis subsp. holarctica (strain FTNF002-00 / FTA).